The primary structure comprises 519 residues: Iroquois-class homeodomain protein IRX-4 (519 aa).

Positions Gly143–Asn204 form a DNA-binding region, homeobox; TALE-type. Positions Asn204–Lys298 are disordered. A compositionally biased stretch (basic and acidic residues) spans Lys213–Ala222. Composition is skewed to acidic residues over residues Glu223–Arg235 and Leu257–Glu267.

Belongs to the TALE/IRO homeobox family. As to quaternary structure, interacts with the vitamin D receptor VDR but doesn't affect its transactivation activity. Predominantly expressed in cardiac ventricles.

Its subcellular location is the nucleus. Likely to be an important mediator of ventricular differentiation during cardiac development. The sequence is that of Iroquois-class homeodomain protein IRX-4 (IRX4) from Homo sapiens (Human).